The chain runs to 390 residues: Probable protein phosphatase 2C 30 (390 aa).

The segment covering 1–10 (MQLSKNPIKQ) has biased composition (polar residues). 2 disordered regions span residues 1–20 (MQLS…NYTD) and 40–85 (PPLV…DSET). The span at 44–61 (FSPTSVKTPLSSPRSSPP) shows a compositional bias: low complexity. One can recognise a PPM-type phosphatase domain in the interval 128–385 (YYSVYCKRGR…DDISLIIIQL (258 aa)). Mn(2+) is bound by residues aspartate 166, glycine 167, aspartate 331, and aspartate 376.

It belongs to the PP2C family. Requires Mg(2+) as cofactor. The cofactor is Mn(2+).

It catalyses the reaction O-phospho-L-seryl-[protein] + H2O = L-seryl-[protein] + phosphate. The catalysed reaction is O-phospho-L-threonyl-[protein] + H2O = L-threonyl-[protein] + phosphate. This Arabidopsis thaliana (Mouse-ear cress) protein is Probable protein phosphatase 2C 30 (PP2C5).